We begin with the raw amino-acid sequence, 300 residues long: Phosphoribosylaminoimidazole-succinocarboxamide synthase (300 aa).

This sequence belongs to the SAICAR synthetase family.

It catalyses the reaction 5-amino-1-(5-phospho-D-ribosyl)imidazole-4-carboxylate + L-aspartate + ATP = (2S)-2-[5-amino-1-(5-phospho-beta-D-ribosyl)imidazole-4-carboxamido]succinate + ADP + phosphate + 2 H(+). It participates in purine metabolism; IMP biosynthesis via de novo pathway; 5-amino-1-(5-phospho-D-ribosyl)imidazole-4-carboxamide from 5-amino-1-(5-phospho-D-ribosyl)imidazole-4-carboxylate: step 1/2. The polypeptide is Phosphoribosylaminoimidazole-succinocarboxamide synthase (Methylibium petroleiphilum (strain ATCC BAA-1232 / LMG 22953 / PM1)).